The primary structure comprises 222 residues: Charged multivesicular body protein 2a (222 aa).

Met-1 bears the N-acetylmethionine mark. Residues 12–53 adopt a coiled-coil conformation; that stretch reads EELLRQNQRALNRAMRELDRERQKLETQEKKIIADIKKMAKQ. The interval 56 to 222 is interaction with VPS4B; it reads MDAVRIMAKD…EERLKNLRRD (167 aa). The span at 179 to 188 shows a compositional bias: polar residues; the sequence is LSNLPSTGGS. Positions 179–198 are disordered; sequence LSNLPSTGGSLSVAAGGKKA. Ser-184 carries the phosphoserine modification. Phosphothreonine is present on Thr-185. Residues Ser-188, Ser-190, and Ser-203 each carry the phosphoserine modification. Residues 195–222 are a coiled coil; the sequence is GKKAEATASALADADADLEERLKNLRRD. The MIT-interacting motif motif lies at 210–220; the sequence is ADLEERLKNLR. The interval 217–222 is interaction with VTA1; it reads KNLRRD.

This sequence belongs to the SNF7 family. Probable core component of the endosomal sorting required for transport complex III (ESCRT-III). ESCRT-III components are thought to multimerize to form a flat lattice on the perimeter membrane of the endosome. Several assembly forms of ESCRT-III may exist that interact and act sequentially. In vitro, heteromerizes with CHMP3 (but not CHMP4) to form helical tubular structures that expose membrane-interacting sites on the outside whereas VPS4B can associate on the inside of the tubule. Interacts with CHMP1B, CHMP2B, CHMP3, CHMP4A, CHMP4B, CHMP4C and CHMP5. Interacts with VPS4A; the interaction is direct. Interacts with VPS4B; the interaction is direct. Interacts with MITD1. Interacts with VTA1; the interaction probably involves the open conformation of CHMP2A. In terms of processing, ISGylated in a CHMP5-dependent manner. Isgylation weakens and inhibits its interactions with VPS4A and VTA1 respectively. Widely expressed. Highly expressed in brain, heart, liver and kidney.

It localises to the late endosome membrane. It is found in the cytoplasm. Its subcellular location is the nucleus envelope. Functionally, probable core component of the endosomal sorting required for transport complex III (ESCRT-III) which is involved in multivesicular bodies (MVBs) formation and sorting of endosomal cargo proteins into MVBs. MVBs contain intraluminal vesicles (ILVs) that are generated by invagination and scission from the limiting membrane of the endosome and mostly are delivered to lysosomes enabling degradation of membrane proteins, such as stimulated growth factor receptors, lysosomal enzymes and lipids. The MVB pathway appears to require the sequential function of ESCRT-O, -I,-II and -III complexes. ESCRT-III proteins mostly dissociate from the invaginating membrane before the ILV is released. The ESCRT machinery also functions in topologically equivalent membrane fission events, such as the terminal stages of cytokinesis. Together with SPAST, the ESCRT-III complex promotes nuclear envelope sealing and mitotic spindle disassembly during late anaphase. Recruited to the reforming nuclear envelope (NE) during anaphase by LEMD2. ESCRT-III proteins are believed to mediate the necessary vesicle extrusion and/or membrane fission activities, possibly in conjunction with the AAA ATPase VPS4. The chain is Charged multivesicular body protein 2a (Chmp2a) from Mus musculus (Mouse).